Here is a 184-residue protein sequence, read N- to C-terminus: uncharacterized protein (184 aa).

The tract at residues 130-149 (DKDDDKKKKKKDDKKDDPCN) is disordered.

It localises to the virion. This is an uncharacterized protein from Acanthamoeba polyphaga (Amoeba).